A 251-amino-acid chain; its full sequence is Flap endonuclease Xni (251 aa).

Residue Asp104 participates in Mg(2+) binding. The 5'-3' exonuclease domain occupies 160–249 (VSPGQLADFW…LDGNLQQLRL (90 aa)). K(+)-binding residues include Leu171, Ala172, Pro180, Val182, and Ile185. The interval 184 to 189 (GIGPKS) is interaction with DNA.

Belongs to the Xni family. Requires Mg(2+) as cofactor. K(+) serves as cofactor.

In terms of biological role, has flap endonuclease activity. During DNA replication, flap endonucleases cleave the 5'-overhanging flap structure that is generated by displacement synthesis when DNA polymerase encounters the 5'-end of a downstream Okazaki fragment. The sequence is that of Flap endonuclease Xni from Cronobacter sakazakii (strain ATCC BAA-894) (Enterobacter sakazakii).